A 216-amino-acid chain; its full sequence is uncharacterized protein (216 aa).

Residues 8 to 63 enclose the HTH cro/C1-type domain; the sequence is LKTLMTSVHINASELARRTGIAQPIIHRLSTGQNTNPKLATIKPIARYFMVNISQL. The H-T-H motif DNA-binding region spans 19–38; sequence ASELARRTGIAQPIIHRLST.

This is an uncharacterized protein from Coxiella burnetii (strain RSA 493 / Nine Mile phase I).